Consider the following 345-residue polypeptide: Myb/SANT-like DNA-binding domain-containing protein 4 (345 aa).

In terms of domain architecture, Myb-like spans 4 to 77 (LKRKRKSNFS…EVKRRYLDWR (74 aa)). A Glycyl lysine isopeptide (Lys-Gly) (interchain with G-Cter in SUMO2) cross-link involves residue K9. S106 carries the phosphoserine modification. Residues K114 and K142 each participate in a glycyl lysine isopeptide (Lys-Gly) (interchain with G-Cter in SUMO2) cross-link. The segment at 141–175 (VKVEEEERDPQSPEFEIEEEEEMLSSVIPDSRREN) is disordered. Position 188 is a phosphothreonine (T188). A coiled-coil region spans residues 202–344 (HLLMNIEKQK…RLRIQKEGHL (143 aa)). Residues K237, K254, and K273 each participate in a glycyl lysine isopeptide (Lys-Gly) (interchain with G-Cter in SUMO2) cross-link.

In Rattus norvegicus (Rat), this protein is Myb/SANT-like DNA-binding domain-containing protein 4 (Msantd4).